A 261-amino-acid polypeptide reads, in one-letter code: Segregation and condensation protein A (261 aa).

The protein belongs to the ScpA family. Component of a cohesin-like complex composed of ScpA, ScpB and the Smc homodimer, in which ScpA and ScpB bind to the head domain of Smc. The presence of the three proteins is required for the association of the complex with DNA.

It localises to the cytoplasm. Its function is as follows. Participates in chromosomal partition during cell division. May act via the formation of a condensin-like complex containing Smc and ScpB that pull DNA away from mid-cell into both cell halves. This chain is Segregation and condensation protein A, found in Ligilactobacillus salivarius (strain UCC118) (Lactobacillus salivarius).